The sequence spans 672 residues: Putative per-hexamer repeat protein 5 (672 aa).

Composition is skewed to gly residues over residues 141–161 (TGTG…GTGT), 171–191 (TDRG…GTGT), 215–233 (TGTG…GTDT), 243–263 (TGTG…GTGT), 273–295 (TDRG…GTGT), 303–355 (TGTG…GSGS), and 365–389 (TGTG…GSGS). Disordered regions lie at residues 141 to 193 (TGTG…GTGT) and 213 to 672 (TGTG…TGTA). Residues 390–424 (GTAKVTGTATTTATVTETGTAKVTGTDTGTAKVTG) show a composition bias toward low complexity. Residues 425–469 (TGTGTGTGTGTGTGTGTGTGTGTGTGTGTGTGTGTGTGTGTGSGS) are compositionally biased toward gly residues. The segment covering 470 to 486 (GTAKVTGTDTGTAKVTG) has biased composition (low complexity). Residues 487-537 (TGTGTGTGTGTGTGTGTGTGTGTGSGSGSGSGSGSGSGTGTGTGLGSGSGS) show a composition bias toward gly residues. Positions 538 to 552 (GTAKVTGTGTAKVTG) are enriched in low complexity. The span at 553 to 617 (TGTGTGTGTG…GTGTGTGTGT (65 aa)) shows a compositional bias: gly residues. The segment covering 618-636 (GTSTVTVRGTGTGTATATG) has biased composition (low complexity). Gly residues-rich tracts occupy residues 637–653 (TGTG…GTGT) and 663–672 (RGTGTGTGTA).

The sequence is that of Putative per-hexamer repeat protein 5 (Phxr5) from Mus musculus (Mouse).